The sequence spans 374 residues: N5-carboxyaminoimidazole ribonucleotide synthase (374 aa).

ATP contacts are provided by residues Arg108, Lys148, Gly153–Gln159, Glu183–Leu186, Glu191, His214, and Asn266–Glu267. Residues Lys112–Thr296 form the ATP-grasp domain.

This sequence belongs to the PurK/PurT family. Homodimer.

It catalyses the reaction 5-amino-1-(5-phospho-beta-D-ribosyl)imidazole + hydrogencarbonate + ATP = 5-carboxyamino-1-(5-phospho-D-ribosyl)imidazole + ADP + phosphate + 2 H(+). Its pathway is purine metabolism; IMP biosynthesis via de novo pathway; 5-amino-1-(5-phospho-D-ribosyl)imidazole-4-carboxylate from 5-amino-1-(5-phospho-D-ribosyl)imidazole (N5-CAIR route): step 1/2. Its function is as follows. Catalyzes the ATP-dependent conversion of 5-aminoimidazole ribonucleotide (AIR) and HCO(3)(-) to N5-carboxyaminoimidazole ribonucleotide (N5-CAIR). The protein is N5-carboxyaminoimidazole ribonucleotide synthase of Staphylococcus aureus (strain Mu50 / ATCC 700699).